The chain runs to 426 residues: CinA-like protein (426 aa).

It belongs to the CinA family.

The chain is CinA-like protein from Gloeobacter violaceus (strain ATCC 29082 / PCC 7421).